Consider the following 327-residue polypeptide: Quinone oxidoreductase 1 (327 aa).

NADP(+) contacts are provided by residues 42-46 (FIDTY), tyrosine 130, 152-153 (GV), 173-177 (GTAQK), tyrosine 192, serine 216, 238-241 (FGNS), 264-266 (PSL), and arginine 317.

It belongs to the zinc-containing alcohol dehydrogenase family. Quinone oxidoreductase subfamily. Homodimer.

The enzyme catalyses 2 a quinone + NADPH + H(+) = 2 a 1,4-benzosemiquinone + NADP(+). This is Quinone oxidoreductase 1 (qorA) from Escherichia coli (strain K12).